Consider the following 278-residue polypeptide: Elongation factor Ts (278 aa).

The interval 79–82 (TDFV) is involved in Mg(2+) ion dislocation from EF-Tu.

It belongs to the EF-Ts family.

The protein resides in the cytoplasm. Its function is as follows. Associates with the EF-Tu.GDP complex and induces the exchange of GDP to GTP. It remains bound to the aminoacyl-tRNA.EF-Tu.GTP complex up to the GTP hydrolysis stage on the ribosome. The polypeptide is Elongation factor Ts (Borrelia hermsii (strain HS1 / DAH)).